Here is a 175-residue protein sequence, read N- to C-terminus: Adenine phosphoribosyltransferase (175 aa).

The protein belongs to the purine/pyrimidine phosphoribosyltransferase family. In terms of assembly, homodimer.

Its subcellular location is the cytoplasm. The enzyme catalyses AMP + diphosphate = 5-phospho-alpha-D-ribose 1-diphosphate + adenine. The protein operates within purine metabolism; AMP biosynthesis via salvage pathway; AMP from adenine: step 1/1. Its function is as follows. Catalyzes a salvage reaction resulting in the formation of AMP, that is energically less costly than de novo synthesis. The chain is Adenine phosphoribosyltransferase from Lactobacillus gasseri (strain ATCC 33323 / DSM 20243 / BCRC 14619 / CIP 102991 / JCM 1131 / KCTC 3163 / NCIMB 11718 / NCTC 13722 / AM63).